The sequence spans 145 residues: D-aminoacyl-tRNA deacylase (145 aa).

Positions Gly-133–Pro-134 match the Gly-cisPro motif, important for rejection of L-amino acids motif.

It belongs to the DTD family. In terms of assembly, homodimer.

The protein localises to the cytoplasm. The enzyme catalyses glycyl-tRNA(Ala) + H2O = tRNA(Ala) + glycine + H(+). The catalysed reaction is a D-aminoacyl-tRNA + H2O = a tRNA + a D-alpha-amino acid + H(+). In terms of biological role, an aminoacyl-tRNA editing enzyme that deacylates mischarged D-aminoacyl-tRNAs. Also deacylates mischarged glycyl-tRNA(Ala), protecting cells against glycine mischarging by AlaRS. Acts via tRNA-based rather than protein-based catalysis; rejects L-amino acids rather than detecting D-amino acids in the active site. By recycling D-aminoacyl-tRNA to D-amino acids and free tRNA molecules, this enzyme counteracts the toxicity associated with the formation of D-aminoacyl-tRNA entities in vivo and helps enforce protein L-homochirality. This is D-aminoacyl-tRNA deacylase from Cutibacterium acnes (strain DSM 16379 / KPA171202) (Propionibacterium acnes).